Consider the following 931-residue polypeptide: Isoleucine--tRNA ligase (931 aa).

Positions 58–68 match the 'HIGH' region motif; that stretch reads PYANGHLHCGH. Position 559 (Glu-559) interacts with L-isoleucyl-5'-AMP. The short motif at 600-604 is the 'KMSKS' region element; it reads KLSKS. Residue Lys-603 participates in ATP binding. Positions 894, 897, 914, and 917 each coordinate Zn(2+).

This sequence belongs to the class-I aminoacyl-tRNA synthetase family. IleS type 1 subfamily. In terms of assembly, monomer. Zn(2+) is required as a cofactor.

The protein resides in the cytoplasm. The catalysed reaction is tRNA(Ile) + L-isoleucine + ATP = L-isoleucyl-tRNA(Ile) + AMP + diphosphate. Functionally, catalyzes the attachment of isoleucine to tRNA(Ile). As IleRS can inadvertently accommodate and process structurally similar amino acids such as valine, to avoid such errors it has two additional distinct tRNA(Ile)-dependent editing activities. One activity is designated as 'pretransfer' editing and involves the hydrolysis of activated Val-AMP. The other activity is designated 'posttransfer' editing and involves deacylation of mischarged Val-tRNA(Ile). The chain is Isoleucine--tRNA ligase from Legionella pneumophila (strain Lens).